The primary structure comprises 237 residues: Endonuclease V (237 aa).

Asp46 and Asp114 together coordinate Mg(2+).

The protein belongs to the endonuclease V family. Mg(2+) is required as a cofactor.

The protein localises to the cytoplasm. The catalysed reaction is Endonucleolytic cleavage at apurinic or apyrimidinic sites to products with a 5'-phosphate.. Its function is as follows. DNA repair enzyme involved in the repair of deaminated bases. Selectively cleaves double-stranded DNA at the second phosphodiester bond 3' to a deoxyinosine leaving behind the intact lesion on the nicked DNA. This Xanthomonas axonopodis pv. citri (strain 306) protein is Endonuclease V.